The chain runs to 232 residues: 6-phosphogluconolactonase (232 aa).

This sequence belongs to the glucosamine/galactosamine-6-phosphate isomerase family. 6-phosphogluconolactonase subfamily.

It catalyses the reaction 6-phospho-D-glucono-1,5-lactone + H2O = 6-phospho-D-gluconate + H(+). Its pathway is carbohydrate degradation; pentose phosphate pathway; D-ribulose 5-phosphate from D-glucose 6-phosphate (oxidative stage): step 2/3. Its function is as follows. Hydrolysis of 6-phosphogluconolactone to 6-phosphogluconate. This chain is 6-phosphogluconolactonase (pgl), found in Aggregatibacter actinomycetemcomitans (Actinobacillus actinomycetemcomitans).